Consider the following 428-residue polypeptide: Glutamate-1-semialdehyde 2,1-aminomutase (428 aa).

Lys265 carries the post-translational modification N6-(pyridoxal phosphate)lysine.

The protein belongs to the class-III pyridoxal-phosphate-dependent aminotransferase family. HemL subfamily. As to quaternary structure, homodimer. It depends on pyridoxal 5'-phosphate as a cofactor.

The protein resides in the cytoplasm. It catalyses the reaction (S)-4-amino-5-oxopentanoate = 5-aminolevulinate. Its pathway is porphyrin-containing compound metabolism; protoporphyrin-IX biosynthesis; 5-aminolevulinate from L-glutamyl-tRNA(Glu): step 2/2. The chain is Glutamate-1-semialdehyde 2,1-aminomutase from Proteus mirabilis (strain HI4320).